A 500-amino-acid chain; its full sequence is Protein FAM114A2 (500 aa).

Positions 1–82 (MSNKDDLETA…AAGKETVSKD (82 aa)) are disordered. Residues Ser93, Ser152, and Ser215 each carry the phosphoserine modification.

Belongs to the FAM114 family.

The polypeptide is Protein FAM114A2 (FAM114A1) (Bos taurus (Bovine)).